A 732-amino-acid chain; its full sequence is X-ray repair cross-complementing protein 5 (732 aa).

The VWFA domain maps to 9 to 161 (AVVLCVDVGV…CNLKKSGISL (153 aa)). The segment at 138–165 (LSSPFSQDQLDVIICNLKKSGISLQFFL) is leucine-zipper. A Glycyl lysine isopeptide (Lys-Gly) (interchain with G-Cter in SUMO2) cross-link involves residue Lys-195. In terms of domain architecture, Ku spans 253 to 453 (IGPNLSIKIV…CTPTEAQLSA (201 aa)). At Ser-258 the chain carries Phosphoserine. N6-acetyllysine is present on Lys-265. Phosphoserine is present on Ser-318. Lys-332 carries the post-translational modification N6-acetyllysine. Glycyl lysine isopeptide (Lys-Gly) (interchain with G-Cter in SUMO2) cross-links involve residues Lys-532 and Lys-534. Thr-535 carries the post-translational modification Phosphothreonine. Glycyl lysine isopeptide (Lys-Gly) (interchain with G-Cter in SUMO2) cross-links involve residues Lys-567 and Lys-569. Residues Ser-578, Ser-580, and Ser-581 each carry the phosphoserine; by PRKDC modification. An N6-acetyllysine modification is found at Lys-666. Glycyl lysine isopeptide (Lys-Gly) (interchain with G-Cter in SUMO2) cross-links involve residues Lys-670 and Lys-689. Residues 708 to 732 (PKDKAKEDTTGPEEAGDVDDLLDMI) are disordered. Position 716 is a phosphothreonine; by PRKDC (Thr-716). Positions 717–732 (TGPEEAGDVDDLLDMI) are enriched in acidic residues. An EEXXXDL motif motif is present at residues 720–728 (EEAGDVDDL).

The protein belongs to the ku80 family. Heterodimer composed of XRCC5/Ku80 and XRCC6/Ku70. Component of the core long-range non-homologous end joining (NHEJ) complex (also named DNA-PK complex) composed of PRKDC, LIG4, XRCC4, XRCC6/Ku70, XRCC5/Ku86 and NHEJ1/XLF. Additional component of the NHEJ complex includes PAXX. Following autophosphorylation, PRKDC dissociates from DNA, leading to formation of the short-range NHEJ complex, composed of LIG4, XRCC4, XRCC6/Ku70, XRCC5/Ku86 and NHEJ1/XLF. The XRCC5-XRCC6 dimer also associates with NAA15, and this complex displays DNA binding activity towards the osteocalcin FGF response element (OCFRE). In addition, XRCC5 binds to the osteoblast-specific transcription factors MSX2 and RUNX2. Interacts with ELF3. Interacts with APLF (via KBM motif). The XRCC5/XRCC6 dimer associates in a DNA-dependent manner with APEX1. Identified in a complex with DEAF1 and XRCC6. Interacts with NR4A3; the DNA-dependent protein kinase complex DNA-PK phosphorylates and activates NR4A3 and prevents NR4A3 ubiquitinylation and degradation. Interacts with RNF138. Interacts with CYREN (via KBM motif). Interacts with WRN (via KBM motif). Interacts (via N-terminus) with HSF1 (via N-terminus); this interaction is direct and prevents XRCC5/XRCC6 heterodimeric binding and non-homologous end joining (NHEJ) repair activities induced by ionizing radiation (IR). Interacts with DHX9; this interaction occurs in a RNA-dependent manner. Part of the HDP-RNP complex composed of at least HEXIM1, PRKDC, XRCC5, XRCC6, paraspeckle proteins (SFPQ, NONO, PSPC1, RBM14, and MATR3) and NEAT1 RNA. Interacts with ERCC6. Interacts with ATF7. The XRCC5-XRCC6 dimer associates with ALKBH2. Interacts with TPRN; TPRN interacts with a number of DNA damage response proteins, is recruited to sites of DNA damage and may play a role in DNA damage repair. Interacts with ERCC6L2. ADP-ribosylated by PARP3. Post-translationally, phosphorylated on serine residues. Phosphorylation by PRKDC may enhance helicase activity. In terms of processing, sumoylated. Ubiquitinated by RNF8 via 'Lys-48'-linked ubiquitination following DNA damage, leading to its degradation and removal from DNA damage sites. Ubiquitinated by RNF138, leading to remove the Ku complex from DNA breaks.

It is found in the nucleus. It localises to the nucleolus. The protein localises to the chromosome. In terms of biological role, single-stranded DNA-dependent ATP-dependent helicase that plays a key role in DNA non-homologous end joining (NHEJ) by recruiting DNA-PK to DNA. Required for double-strand break repair and V(D)J recombination. Also has a role in chromosome translocation. The DNA helicase II complex binds preferentially to fork-like ends of double-stranded DNA in a cell cycle-dependent manner. It works in the 3'-5' direction. During NHEJ, the XRCC5-XRRC6 dimer performs the recognition step: it recognizes and binds to the broken ends of the DNA and protects them from further resection. Binding to DNA may be mediated by XRCC6. The XRCC5-XRRC6 dimer acts as a regulatory subunit of the DNA-dependent protein kinase complex DNA-PK by increasing the affinity of the catalytic subunit PRKDC to DNA by 100-fold. The XRCC5-XRRC6 dimer is probably involved in stabilizing broken DNA ends and bringing them together. The assembly of the DNA-PK complex to DNA ends is required for the NHEJ ligation step. The XRCC5-XRRC6 dimer probably also acts as a 5'-deoxyribose-5-phosphate lyase (5'-dRP lyase), by catalyzing the beta-elimination of the 5' deoxyribose-5-phosphate at an abasic site near double-strand breaks. XRCC5 probably acts as the catalytic subunit of 5'-dRP activity, and allows to 'clean' the termini of abasic sites, a class of nucleotide damage commonly associated with strand breaks, before such broken ends can be joined. The XRCC5-XRRC6 dimer together with APEX1 acts as a negative regulator of transcription. In association with NAA15, the XRCC5-XRRC6 dimer binds to the osteocalcin promoter and activates osteocalcin expression. As part of the DNA-PK complex, involved in the early steps of ribosome assembly by promoting the processing of precursor rRNA into mature 18S rRNA in the small-subunit processome. Binding to U3 small nucleolar RNA, recruits PRKDC and XRCC5/Ku86 to the small-subunit processome. Plays a role in the regulation of DNA virus-mediated innate immune response by assembling into the HDP-RNP complex, a complex that serves as a platform for IRF3 phosphorylation and subsequent innate immune response activation through the cGAS-STING pathway. The polypeptide is X-ray repair cross-complementing protein 5 (Xrcc5) (Mus musculus (Mouse)).